The primary structure comprises 258 residues: MTATPLYCAEPARLDTARRLCERFSLPLIKQRPADGYWLELGSERLELLTTGKHGAVYAEFVEGAARHRREQGGGRGQPVAKAVGLKGAKDLPHVADATAGLGRDSFVLATLGCRVTMVERSPVAAALLADALERAQRDETTRDIAARMTLVHANSRNWLAGLTEAQRPDVVFVDPMFPDTDKKSAAAKKDMQAFQQVIGDDMDSAELLAAAIAAARVRVVVKRPRLGAAIAGVKPSAVLDGKSTRFDLYVIKALASG.

Residues 104–105, 120–121, and Asp-175 contribute to the S-adenosyl-L-methionine site; these read RD and ER.

It belongs to the methyltransferase superfamily. RsmJ family.

It localises to the cytoplasm. It carries out the reaction guanosine(1516) in 16S rRNA + S-adenosyl-L-methionine = N(2)-methylguanosine(1516) in 16S rRNA + S-adenosyl-L-homocysteine + H(+). Functionally, specifically methylates the guanosine in position 1516 of 16S rRNA. The polypeptide is Ribosomal RNA small subunit methyltransferase J (Chromobacterium violaceum (strain ATCC 12472 / DSM 30191 / JCM 1249 / CCUG 213 / NBRC 12614 / NCIMB 9131 / NCTC 9757 / MK)).